Here is a 257-residue protein sequence, read N- to C-terminus: Membrane protein insertase YidC 1 (257 aa).

The signal sequence occupies residues M1–G20. The N-palmitoyl cysteine moiety is linked to residue C21. The S-diacylglycerol cysteine moiety is linked to residue C21. A run of 5 helical transmembrane segments spans residues I35–F55, F59–I79, L129–I149, F160–T180, and V205–G225.

Belongs to the OXA1/ALB3/YidC family. Type 2 subfamily.

Its subcellular location is the cell membrane. In terms of biological role, required for the insertion and/or proper folding and/or complex formation of integral membrane proteins into the membrane. Involved in integration of membrane proteins that insert both dependently and independently of the Sec translocase complex, as well as at least some lipoproteins. The chain is Membrane protein insertase YidC 1 from Halalkalibacterium halodurans (strain ATCC BAA-125 / DSM 18197 / FERM 7344 / JCM 9153 / C-125) (Bacillus halodurans).